The following is a 360-amino-acid chain: Phospho-N-acetylmuramoyl-pentapeptide-transferase (360 aa).

10 consecutive transmembrane segments (helical) span residues 21–41, 73–93, 94–114, 132–152, 168–188, 199–219, 236–256, 263–283, 288–308, and 338–358; these read YLSF…LWMG, TMGG…WANL, SNPY…VGFV, WKYF…YAYG, VMPQ…VGTS, GLAI…AWAT, ASEL…FLWF, VFMG…IAVL, LVLV…ILQV, and VIVR…ATLK.

It belongs to the glycosyltransferase 4 family. MraY subfamily. The cofactor is Mg(2+).

The protein localises to the cell inner membrane. It catalyses the reaction UDP-N-acetyl-alpha-D-muramoyl-L-alanyl-gamma-D-glutamyl-meso-2,6-diaminopimeloyl-D-alanyl-D-alanine + di-trans,octa-cis-undecaprenyl phosphate = di-trans,octa-cis-undecaprenyl diphospho-N-acetyl-alpha-D-muramoyl-L-alanyl-D-glutamyl-meso-2,6-diaminopimeloyl-D-alanyl-D-alanine + UMP. Its pathway is cell wall biogenesis; peptidoglycan biosynthesis. In terms of biological role, catalyzes the initial step of the lipid cycle reactions in the biosynthesis of the cell wall peptidoglycan: transfers peptidoglycan precursor phospho-MurNAc-pentapeptide from UDP-MurNAc-pentapeptide onto the lipid carrier undecaprenyl phosphate, yielding undecaprenyl-pyrophosphoryl-MurNAc-pentapeptide, known as lipid I. This Vibrio vulnificus (strain CMCP6) protein is Phospho-N-acetylmuramoyl-pentapeptide-transferase.